Consider the following 1012-residue polypeptide: Vacuolar membrane protease (1012 aa).

Residues 1 to 60 (MRRSTDPRNLLVRRGPLLVDGESAISELDPGFFPTGDAPKMSSTTRRRFNLIAFTPGPVT) are Cytoplasmic-facing. Residues 61-81 (VISSLVYLALLIPLLLVHTIV) form a helical membrane-spanning segment. Residues 82–432 (PSAPKSNPKG…SFAVFRLHTL (351 aa)) are Vacuolar-facing. A glycan (N-linked (GlcNAc...) asparagine) is linked at Asn159. 2 residues coordinate Zn(2+): His215 and Asp227. The active-site Proton acceptor is Glu261. Zn(2+) is bound by residues Glu262, Glu287, and His360. Residues 433-453 (FAISVTLLVVCPIVLFVIGII) form a helical membrane-spanning segment. At 454–487 (LSKMDKMYLFSIHETIPETKEKVSVRGLRGLFRY) the chain is on the cytoplasmic side. The helical transmembrane segment at 488–508 (PIILVVSSGILIGLSYLLAKV) threads the bilayer. Residues 509–518 (NPFIVHSSSY) are Vacuolar-facing. The chain crosses the membrane as a helical span at residues 519–539 (AVWSMMLSSWIFMTWFLSCIA). Over 540-550 (DFFRPSALHRA) the chain is Cytoplasmic. A helical membrane pass occupies residues 551 to 571 (YTFTWQLLVMWVLLVISTVYV). The Vacuolar segment spans residues 572–575 (NQHD). The helical transmembrane segment at 576–596 (IAAGYFIVFYFAGTFLATLIS) threads the bilayer. Residues 597-710 (YLELFALPNK…WSASLPTWTW (114 aa)) lie on the Cytoplasmic side of the membrane. Polar residues predominate over residues 614 to 629 (SQYPSRLGSNRSSRIL). The segment at 614-660 (SQYPSRLGSNRSSRILSPSADELPTGGDNNGEIYDGEEEPTESSSLL) is disordered. A helical transmembrane segment spans residues 711-731 (VLQFLFVGPVVIMFIGQLGLF). Residues 732–743 (LTSAMNQVGADG) lie on the Vacuolar side of the membrane. Residues 744-764 (VGLLVVYIAIAVFSVLLLIPL) traverse the membrane as a helical segment. Residues 765–777 (SPFIHRFTYHVPT) lie on the Cytoplasmic side of the membrane. Residues 778–798 (FLLLVFIATLIYNLAAFPFSA) traverse the membrane as a helical segment. At 799-1012 (ENRLKIFFVQ…DGLVEVSRGF (214 aa)) the chain is on the vacuolar side. N-linked (GlcNAc...) asparagine glycosylation is found at Asn842 and Asn878.

The protein belongs to the peptidase M28 family. The cofactor is Zn(2+).

The protein localises to the vacuole membrane. In terms of biological role, may be involved in vacuolar sorting and osmoregulation. This chain is Vacuolar membrane protease, found in Coccidioides posadasii (strain C735) (Valley fever fungus).